Reading from the N-terminus, the 339-residue chain is Heat-inducible transcription repressor HrcA (339 aa).

It belongs to the HrcA family.

Its function is as follows. Negative regulator of class I heat shock genes (grpE-dnaK-dnaJ and groELS operons). Prevents heat-shock induction of these operons. The sequence is that of Heat-inducible transcription repressor HrcA from Methylobacillus flagellatus (strain ATCC 51484 / DSM 6875 / VKM B-1610 / KT).